The primary structure comprises 286 residues: Pantothenate synthetase (286 aa).

ATP is bound at residue 31-38 (MGALHDGH). Residue H38 is the Proton donor of the active site. Q62 contributes to the (R)-pantoate binding site. Residue Q62 coordinates beta-alanine. 148-151 (GKKD) lines the ATP pocket. Q154 contacts (R)-pantoate. ATP-binding positions include V177 and 185 to 188 (KSSR).

It belongs to the pantothenate synthetase family. Homodimer.

The protein localises to the cytoplasm. The catalysed reaction is (R)-pantoate + beta-alanine + ATP = (R)-pantothenate + AMP + diphosphate + H(+). The protein operates within cofactor biosynthesis; (R)-pantothenate biosynthesis; (R)-pantothenate from (R)-pantoate and beta-alanine: step 1/1. Functionally, catalyzes the condensation of pantoate with beta-alanine in an ATP-dependent reaction via a pantoyl-adenylate intermediate. This chain is Pantothenate synthetase, found in Staphylococcus epidermidis (strain ATCC 35984 / DSM 28319 / BCRC 17069 / CCUG 31568 / BM 3577 / RP62A).